The chain runs to 177 residues: Shikimate kinase (177 aa).

14-19 (GSGKST) is an ATP binding site. Serine 18 serves as a coordination point for Mg(2+). Residues aspartate 36, arginine 60, and glycine 82 each coordinate substrate. Arginine 120 is an ATP binding site. Substrate is bound at residue arginine 139.

This sequence belongs to the shikimate kinase family. In terms of assembly, monomer. Requires Mg(2+) as cofactor.

It localises to the cytoplasm. The catalysed reaction is shikimate + ATP = 3-phosphoshikimate + ADP + H(+). The protein operates within metabolic intermediate biosynthesis; chorismate biosynthesis; chorismate from D-erythrose 4-phosphate and phosphoenolpyruvate: step 5/7. Catalyzes the specific phosphorylation of the 3-hydroxyl group of shikimic acid using ATP as a cosubstrate. The chain is Shikimate kinase from Gloeobacter violaceus (strain ATCC 29082 / PCC 7421).